A 628-amino-acid polypeptide reads, in one-letter code: Netrin-4 (628 aa).

The N-terminal stretch at 1–19 is a signal peptide; the sequence is MGSCARLLLLWGCSAVAAG. Residues 30–261 enclose the Laminin N-terminal domain; it reads CEKACNPRMG…AVYDFIVKGS (232 aa). 2 N-linked (GlcNAc...) asparagine glycosylation sites follow: Asn56 and Asn163. Disulfide bonds link Cys262–Cys271, Cys264–Cys293, Cys295–Cys304, Cys307–Cys329, Cys332–Cys341, Cys334–Cys359, Cys362–Cys371, Cys374–Cys392, Cys395–Cys413, Cys397–Cys420, Cys422–Cys431, and Cys434–Cys446. 3 Laminin EGF-like domains span residues 262 to 331, 332 to 394, and 395 to 448; these read CFCN…ECRT, CKCN…ACKA, and CSCH…GCRP. An N-linked (GlcNAc...) asparagine glycan is attached at Asn353. Asn483 carries N-linked (GlcNAc...) asparagine glycosylation. Intrachain disulfides connect Cys506-Cys576 and Cys520-Cys627. Positions 506–627 constitute an NTR domain; sequence CECKEQVLGN…RVMHILKRDC (122 aa).

In terms of assembly, may form a homodimer. In terms of tissue distribution, expressed in kidney, liver, heart, ovary, testis, retina, brain, olfactory bulb, and widely expressed in embryo.

The protein resides in the secreted. It is found in the extracellular space. The protein localises to the extracellular matrix. Its subcellular location is the basement membrane. In terms of biological role, may play an important role in neural, kidney and vascular development. Promotes neurite elongation from olfactory bulb explants. The chain is Netrin-4 (Ntn4) from Mus musculus (Mouse).